The sequence spans 400 residues: MSLYRTFTANDAVEYARQFGGVSQPQTLVAAEEIGDGNLNLVFKIKDETGVSRVIVKQALPYVRCVGESWPLTLDRARIEAETLLTHARFCPQHTVTVLYHDPELAVMVQEDLSDHRIWRSELVKGADYPQAAAQLGEYLAQTLFHTSDFHQHPHEKKAAVSQFTNPELCQITEDLFFTDPYIEHERNQFDAALTPDVQALRDDKALKLAVAGLKHGFLSKAEALLHGDIHSGSIFVAEGRLKAIDAEFGFYGPIGFDVGTAIGNLLLNYCGLPGLLAPREAAAGRERRLEDIRTLWQTFSARFLALSDNESRDPALAESGYAALFLQQVWRDAVGYCGTELIRRTIGLAHVADLDSIQETEARLACQRHAISLGRTLVLAAPHIADVDALLARVRQSGA.

ATP contacts are provided by residues Asn40, Lys57, and 111 to 113; that span reads EDL. Residue Asp229 participates in substrate binding. 246–248 contacts ATP; that stretch reads DAE. A substrate-binding site is contributed by Arg344.

Belongs to the methylthioribose kinase family. Homodimer.

The enzyme catalyses 5-(methylsulfanyl)-D-ribose + ATP = 5-(methylsulfanyl)-alpha-D-ribose 1-phosphate + ADP + H(+). Its pathway is amino-acid biosynthesis; L-methionine biosynthesis via salvage pathway; S-methyl-5-thio-alpha-D-ribose 1-phosphate from S-methyl-5'-thioadenosine (hydrolase route): step 2/2. Functionally, catalyzes the phosphorylation of methylthioribose into methylthioribose-1-phosphate. The chain is Methylthioribose kinase from Pectobacterium carotovorum subsp. carotovorum (strain PC1).